We begin with the raw amino-acid sequence, 463 residues long: Glutamate--tRNA ligase 2 (463 aa).

Residues 11 to 21 carry the 'HIGH' region motif; the sequence is PSPTGYLHIGG. Positions 240 to 244 match the 'KMSKS' region motif; the sequence is KLSKR. Lys243 is an ATP binding site.

The protein belongs to the class-I aminoacyl-tRNA synthetase family. Glutamate--tRNA ligase type 1 subfamily. In terms of assembly, monomer.

The protein resides in the cytoplasm. The enzyme catalyses tRNA(Glu) + L-glutamate + ATP = L-glutamyl-tRNA(Glu) + AMP + diphosphate. Catalyzes the attachment of glutamate to tRNA(Glu) in a two-step reaction: glutamate is first activated by ATP to form Glu-AMP and then transferred to the acceptor end of tRNA(Glu). This chain is Glutamate--tRNA ligase 2, found in Campylobacter jejuni subsp. jejuni serotype O:2 (strain ATCC 700819 / NCTC 11168).